A 332-amino-acid chain; its full sequence is GLIPR1-like protein 2 (332 aa).

The SCP domain maps to 57–191; the sequence is LHNELRGTVF…THAALFICNY (135 aa). A glycan (N-linked (GlcNAc...) asparagine) is linked at asparagine 145. A helical transmembrane segment spans residues 253–273; the sequence is IFILFLRVASLLLCVIVVLIV. The segment at 293-332 is disordered; it reads EGKTEVEIVMEEGEGEGEGGEGEGEGEEKEEEEMLEEDEQ. Over residues 300 to 332 the composition is skewed to acidic residues; sequence IVMEEGEGEGEGGEGEGEGEEKEEEEMLEEDEQ.

This sequence belongs to the CRISP family.

Its subcellular location is the membrane. This is GLIPR1-like protein 2 (Glipr1l2) from Mus musculus (Mouse).